The chain runs to 88 residues: ATP synthase F(0) complex subunit f, mitochondrial (88 aa).

Residue alanine 2 is modified to N-acetylalanine. Serine 3 is subject to Phosphoserine. Position 16 is an N6-acetyllysine (lysine 16). The chain crosses the membrane as a helical span at residues methionine 62–leucine 79.

Belongs to the ATPase F chain family. As to quaternary structure, component of the ATP synthase complex composed at least of ATP5F1A/subunit alpha, ATP5F1B/subunit beta, ATP5MC1/subunit c (homooctomer), MT-ATP6/subunit a, MT-ATP8/subunit 8, ATP5ME/subunit e, ATP5MF/subunit f, ATP5MG/subunit g, ATP5MK/subunit k, ATP5MJ/subunit j, ATP5F1C/subunit gamma, ATP5F1D/subunit delta, ATP5F1E/subunit epsilon, ATP5PF/subunit F6, ATP5PB/subunit b, ATP5PD/subunit d, ATP5PO/subunit OSCP. ATP synthase complex consists of a soluble F(1) head domain (subunits alpha(3) and beta(3)) - the catalytic core - and a membrane F(0) domain - the membrane proton channel (subunits c, a, 8, e, f, g, k and j). These two domains are linked by a central stalk (subunits gamma, delta, and epsilon) rotating inside the F1 region and a stationary peripheral stalk (subunits F6, b, d, and OSCP).

The protein resides in the mitochondrion. It localises to the mitochondrion inner membrane. In terms of biological role, subunit f, of the mitochondrial membrane ATP synthase complex (F(1)F(0) ATP synthase or Complex V) that produces ATP from ADP in the presence of a proton gradient across the membrane which is generated by electron transport complexes of the respiratory chain. ATP synthase complex consist of a soluble F(1) head domain - the catalytic core - and a membrane F(1) domain - the membrane proton channel. These two domains are linked by a central stalk rotating inside the F(1) region and a stationary peripheral stalk. During catalysis, ATP synthesis in the catalytic domain of F(1) is coupled via a rotary mechanism of the central stalk subunits to proton translocation. In vivo, can only synthesize ATP although its ATP hydrolase activity can be activated artificially in vitro. Part of the complex F(0) domain. This is ATP synthase F(0) complex subunit f, mitochondrial from Rattus norvegicus (Rat).